A 190-amino-acid chain; its full sequence is Voltage-dependent calcium channel gamma-like subunit (190 aa).

The next 4 membrane-spanning stretches (helical) occupy residues 25–45, 96–116, 131–151, and 155–175; these read FIRT…SVSI, ALAV…QLCE, LLVS…LLRN, and LIGF…LFLN.

This sequence belongs to the PMP-22/EMP/MP20 family. CACNG subfamily. The L-type calcium channel is composed of five subunits: alpha-1, alpha-2/delta, beta and gamma.

It is found in the membrane. In terms of biological role, thought to stabilize the calcium channel in an inactivated (closed) state. Modulates calcium current when coexpressed with CACNA1G. The chain is Voltage-dependent calcium channel gamma-like subunit from Homo sapiens (Human).